Here is an 83-residue protein sequence, read N- to C-terminus: Short neurotoxin 3FTx-Oxy3 (83 aa).

The signal sequence occupies residues 1–21; sequence MKTLLLTLVVVTIVCLDLGYT. 4 disulfides stabilise this stretch: C24–C45, C38–C62, C64–C75, and C76–C81.

It belongs to the three-finger toxin family. Short-chain subfamily. Type I alpha-neurotoxin sub-subfamily. Expressed by the venom gland.

The protein localises to the secreted. Binds to muscle nicotinic acetylcholine receptor (nAChR) and inhibit acetylcholine from binding to the receptor, thereby impairing neuromuscular transmission. In Oxyuranus microlepidotus (Inland taipan), this protein is Short neurotoxin 3FTx-Oxy3.